A 453-amino-acid polypeptide reads, in one-letter code: Aldehyde dehydrogenase, dimeric NADP-preferring (453 aa).

Position 2 is an N-acetylserine (S2). K178 is modified (N6-acetyllysine). 188-193 contributes to the NAD(+) binding site; it reads GNTAVG. K194 is modified (N6-acetyllysine). Residues E210 and C244 contribute to the active site.

This sequence belongs to the aldehyde dehydrogenase family. In terms of assembly, homodimer.

The protein localises to the cytoplasm. The enzyme catalyses an aldehyde + NAD(+) + H2O = a carboxylate + NADH + 2 H(+). It carries out the reaction octanal + NAD(+) + H2O = octanoate + NADH + 2 H(+). In terms of biological role, ALDHs play a major role in the detoxification of alcohol-derived acetaldehyde. They are involved in the metabolism of corticosteroids, biogenic amines, neurotransmitters, and lipid peroxidation. Oxidizes medium and long chain aldehydes into non-toxic fatty acids. Preferentially oxidizes aromatic aldehyde substrates. Comprises about 50 percent of corneal epithelial soluble proteins. May play a role in preventing corneal damage caused by ultraviolet light. The sequence is that of Aldehyde dehydrogenase, dimeric NADP-preferring (ALDH3A1) from Canis lupus familiaris (Dog).